Reading from the N-terminus, the 153-residue chain is T cell receptor delta constant (153 aa).

The N-linked (GlcNAc...) asparagine glycan is linked to asparagine 14. Cysteine 20 and cysteine 71 are disulfide-bonded. Asparagine 77 carries an N-linked (GlcNAc...) asparagine glycan. The segment covering 85–102 (FEVKTDSTDHVKPKETEN) has biased composition (basic and acidic residues). Positions 85-112 (FEVKTDSTDHVKPKETENTKQPSKSCHK) are disordered. The helical transmembrane segment at 130 to 152 (LGLRMLFAKTVAVNFLLTAKLFF) threads the bilayer.

Gamma-delta TR is a heterodimer composed of a gamma and delta chain; disulfide-linked. The gamma-delta TR is associated with the transmembrane signaling CD3 coreceptor proteins following the stoichiometry: a single gamma-delta TR heterodimer associates with one CD3D-CD3E heterodimer, one CD3G-CD3E heterodimer and one CD247 homodimer forming a stable octameric structure. Upon activation, gamma-delta TR complex associates with FCER1G to initiate intracellular signaling.

It is found in the cell membrane. Its function is as follows. Constant region of T cell receptor (TR) delta chain that participates in the antigen recognition. Gamma-delta TRs recognize a variety of self and foreign non-peptide antigens frequently expressed at the epithelial boundaries between the host and external environment, including endogenous lipids presented by MH-like protein CD1D and phosphoantigens presented by butyrophilin-like molecule BTN3A1. Upon antigen recognition induces rapid, innate-like immune responses involved in pathogen clearance and tissue repair. Binding of gamma-delta TR complex to antigen triggers phosphorylation of immunoreceptor tyrosine-based activation motifs (ITAMs) in the CD3 chains by the LCK and FYN kinases, allowing the recruitment, phosphorylation, and activation of ZAP70 that facilitates phosphorylation of the scaffolding proteins LCP2 and LAT. This lead to the formation of a supramolecular signalosome that recruits the phospholipase PLCG1, resulting in calcium mobilization and ERK activation, ultimately leading to T cell expansion and differentiation into effector cells. Gamma-delta TRs are produced through somatic rearrangement of a limited repertoire of variable (V), diversity (D), and joining (J) genes. The potential diversity of gamma-delta TRs is conferred by the unique ability to rearrange (D) genes in tandem and to utilize all three reading frames. The combinatorial diversity is considerably increased by the sequence exonuclease trimming and random nucleotide (N) region additions which occur during the V-(D)-J rearrangements. The polypeptide is T cell receptor delta constant (Homo sapiens (Human)).